A 93-amino-acid polypeptide reads, in one-letter code: Small ribosomal subunit protein bS18 (93 aa).

Belongs to the bacterial ribosomal protein bS18 family. As to quaternary structure, part of the 30S ribosomal subunit. Forms a tight heterodimer with protein bS6.

Functionally, binds as a heterodimer with protein bS6 to the central domain of the 16S rRNA, where it helps stabilize the platform of the 30S subunit. The polypeptide is Small ribosomal subunit protein bS18 (Delftia acidovorans (strain DSM 14801 / SPH-1)).